A 430-amino-acid chain; its full sequence is Adenylosuccinate synthetase (430 aa).

GTP contacts are provided by residues 12–18 (GDEGKGK) and 40–42 (GHT). The active-site Proton acceptor is Asp13. Mg(2+)-binding residues include Asp13 and Gly40. Residues 13 to 16 (DEGK), 38 to 41 (NAGH), Thr128, Arg142, Gln223, Thr238, and Arg302 contribute to the IMP site. His41 functions as the Proton donor in the catalytic mechanism. 298-304 (TTTGRPR) contacts substrate. GTP-binding positions include Arg304, 330-332 (SID), and 412-414 (SVG).

The protein belongs to the adenylosuccinate synthetase family. Homodimer. The cofactor is Mg(2+).

The protein resides in the cytoplasm. It catalyses the reaction IMP + L-aspartate + GTP = N(6)-(1,2-dicarboxyethyl)-AMP + GDP + phosphate + 2 H(+). The protein operates within purine metabolism; AMP biosynthesis via de novo pathway; AMP from IMP: step 1/2. Its function is as follows. Plays an important role in the de novo pathway of purine nucleotide biosynthesis. Catalyzes the first committed step in the biosynthesis of AMP from IMP. This chain is Adenylosuccinate synthetase, found in Streptococcus suis (strain 98HAH33).